Reading from the N-terminus, the 234-residue chain is Large ribosomal subunit protein uL1 (234 aa).

This sequence belongs to the universal ribosomal protein uL1 family. In terms of assembly, part of the 50S ribosomal subunit.

Its function is as follows. Binds directly to 23S rRNA. The L1 stalk is quite mobile in the ribosome, and is involved in E site tRNA release. In terms of biological role, protein L1 is also a translational repressor protein, it controls the translation of the L11 operon by binding to its mRNA. This is Large ribosomal subunit protein uL1 from Klebsiella pneumoniae (strain 342).